A 922-amino-acid chain; its full sequence is Chaperone protein ClpC, chloroplastic (922 aa).

Residues 1 to 72 (MARVLAQSLS…RPGLDFHSKV (72 aa)) constitute a chloroplast transit peptide. The Clp R domain maps to 92–234 (FERFTEKAIK…RTQVIRMVGE (143 aa)). Repeat regions lie at residues 95–160 (FTEK…IGRG) and 170–234 (FTPR…MVGE). The segment at 255 to 502 (LEEYGTNLTK…RVRLQHAQLP (248 aa)) is i. 300-307 (GEPGVGKT) lines the ATP pocket. The 36-residue stretch at 509-544 (DKEVRKIVKEKEEYVRNQDFEKAGELRDKEMDLKAQ) folds into the UVR domain. Residues 569 to 760 (VTEVDIQHIV…LLIMTSNVGS (192 aa)) are II. 643–650 (GPTGVGKS) contacts ATP.

This sequence belongs to the ClpA/ClpB family. ClpC subfamily.

The protein localises to the plastid. It localises to the chloroplast. Its function is as follows. Molecular chaperone that may interact with a ClpP-like protease involved in degradation of denatured proteins in the chloroplast. The polypeptide is Chaperone protein ClpC, chloroplastic (Pisum sativum (Garden pea)).